The primary structure comprises 969 residues: Dual serine/threonine and tyrosine protein kinase (969 aa).

Residues 7-37 (QEFRRYLRNRNQLQHVLEETQQALELINLEN) are a coiled coil. The region spanning 632–894 (PHCAEEIGRG…PLLGAIVPVL (263 aa)) is the Protein kinase domain. ATP contacts are provided by residues 638 to 646 (IGRGQYGIV) and lysine 662. The active-site Proton acceptor is the aspartate 760. Positions 904–945 (SKSLQEVSSDKLQESSTDSRNPALALAEPYNQRGTVVSPPPT) are disordered.

The protein belongs to the protein kinase superfamily. Ser/Thr protein kinase family.

It is found in the cytoplasm. The enzyme catalyses L-seryl-[protein] + ATP = O-phospho-L-seryl-[protein] + ADP + H(+). The catalysed reaction is L-threonyl-[protein] + ATP = O-phospho-L-threonyl-[protein] + ADP + H(+). It catalyses the reaction L-tyrosyl-[protein] + ATP = O-phospho-L-tyrosyl-[protein] + ADP + H(+). This Apis mellifera (Honeybee) protein is Dual serine/threonine and tyrosine protein kinase.